A 118-amino-acid chain; its full sequence is Alpha-amylase inhibitor 4 (118 aa).

Cystine bridges form between C7/C60, C21/C49, C30/C82, and C50/C101.

The protein belongs to the protease inhibitor I6 (cereal trypsin/alpha-amylase inhibitor) family.

It is found in the secreted. Alpha-amylase inhibitor. This chain is Alpha-amylase inhibitor 4, found in Sorghum bicolor (Sorghum).